Reading from the N-terminus, the 86-residue chain is Small ribosomal subunit protein bS16 (86 aa).

This sequence belongs to the bacterial ribosomal protein bS16 family.

The sequence is that of Small ribosomal subunit protein bS16 from Myxococcus xanthus (strain DK1622).